The primary structure comprises 420 residues: Glucose-1-phosphate adenylyltransferase (420 aa).

Alpha-D-glucose 1-phosphate contacts are provided by residues tyrosine 107, glycine 172, 187 to 188 (EK), and serine 205.

The protein belongs to the bacterial/plant glucose-1-phosphate adenylyltransferase family. Homotetramer.

It carries out the reaction alpha-D-glucose 1-phosphate + ATP + H(+) = ADP-alpha-D-glucose + diphosphate. The protein operates within glycan biosynthesis; glycogen biosynthesis. Its function is as follows. Involved in the biosynthesis of ADP-glucose, a building block required for the elongation reactions to produce glycogen. Catalyzes the reaction between ATP and alpha-D-glucose 1-phosphate (G1P) to produce pyrophosphate and ADP-Glc. The chain is Glucose-1-phosphate adenylyltransferase from Rhizobium johnstonii (strain DSM 114642 / LMG 32736 / 3841) (Rhizobium leguminosarum bv. viciae).